The following is a 439-amino-acid chain: MQVLPACQSSALKTLCPSPEAFRKLGWLPTSDEVYNEFIDDLTGRTCNEKYSSQVTLLKPIQDFKTFIENDPIVYQEFISMFEGIEQSPTNYHELCNMFNDIFRKAPLYGDLGPPVYMIMARIMNTQAGFSAFTKESLNFHFKKLFDTWGLFLSSKNSRNVLVADQFDDKHYGWFSERAKTAMMINYPGRTFEKVFICDEHVPYHGFTSYDDFFNRRFRDKDTDRPVVGGVTDTTLIGAACESLSYNVSHNVQSLDTLVIKGEAYSLKHLLHNDPFTPQFEHGSIIQGFLNVTAYHRWHSPVNGTIVKIVNVPGTYFAQAPYTIGSPIPDNDRDPPPYLKSLVYFSNIAARQIMFIEADNKDIGLIFLVFIGMTEISTCEATVCEGQHVNRGDDLGMFHFGGSSFALGLRKDSKAKILEKFAKPGTVIRINELVASVRK.

It belongs to the phosphatidylserine decarboxylase family.

It catalyses the reaction L-tryptophan + H(+) = tryptamine + CO2. It participates in secondary metabolite biosynthesis. L-tryptophan decarboxylase; part of the gene cluster that mediates the biosynthesis of psilocybin, a psychotropic tryptamine-derived natural product. The first step in the pathway is the decarboxylation of L-tryptophan to tryptamine by the decarboxylase psiD. PsiD does not decarboxylate phenylalanine, tyrosine, or 5-hydroxy- L -tryptophan (5-HTP). 4-hydroxy-L-tryptophan is accepted as substrate by psiD as well. The cytochrome P450 monooxygenase psiH then converts tryptamine to 4-hydroxytryptamine. The kinase psiK catalyzes the 4-O-phosphorylation step by converting 4-hydroxytryptamine into norbaeocystin. The methyltransferase psiM then catalyzes iterative methyl transfer to the amino group of norbaeocystin to yield psilocybin via a monomethylated intermediate, baeocystin. 4-hydroxy-6-methyl-l-tryptophancan also be converted the decarboxylase PsiD, kinase PsiK, and methyltransferase PsiM into respectively 6-methyl-norbaeocystin, 6-methylbaeocystin, and 6-methylpsilocybin. This chain is L-tryptophan decarboxylase, found in Psilocybe cyanescens.